We begin with the raw amino-acid sequence, 327 residues long: Embigin (327 aa).

Positions 1 to 32 (MRALPGLLEARARTPRLLLLQCLLAAARPSSA) are cleaved as a signal peptide. Residues 33–260 (DGSAPDSPFT…ELVVLSYLVP (228 aa)) are Extracellular-facing. 9 N-linked (GlcNAc...) asparagine glycosylation sites follow: Asn-54, Asn-61, Asn-75, Asn-85, Asn-100, Asn-189, Asn-196, Asn-213, and Asn-218. 2 consecutive Ig-like V-type domains span residues 71–158 (PVEK…NFKV) and 159–253 (PELH…IELV). Cystine bridges form between Cys-88-Cys-142 and Cys-180-Cys-237. The chain crosses the membrane as a helical span at residues 261–281 (LKPFLVIVAEVILLVATILLC). The Cytoplasmic segment spans residues 282–327 (EKYTQKKKKHSDEGKEFEQIEQLKSDDSNGIENNVPRHRKNESLGQ). The segment at 287–327 (KKKKHSDEGKEFEQIEQLKSDDSNGIENNVPRHRKNESLGQ) is disordered. Basic and acidic residues predominate over residues 291 to 308 (HSDEGKEFEQIEQLKSDD). Ser-309 bears the Phosphoserine mark.

In terms of assembly, interacts with SLC16A1, SLC16A6 and SLC16A7.

The protein resides in the cell membrane. The protein localises to the synapse. Plays a role in the outgrowth of motoneurons and in the formation of neuromuscular junctions. Following muscle denervation, promotes nerve terminal sprouting and the formation of additional acetylcholine receptor clusters at synaptic sites without affecting terminal Schwann cell number or morphology. Delays the retraction of terminal sprouts following re-innervation of denervated endplates. May play a role in targeting the monocarboxylate transporters SLC16A1, SLC16A6 and SLC16A7 to the cell membrane. In Homo sapiens (Human), this protein is Embigin (EMB).